A 350-amino-acid chain; its full sequence is UDP-N-acetylenolpyruvoylglucosamine reductase (350 aa).

One can recognise an FAD-binding PCMH-type domain in the interval 24 to 195 (HVEATARWLL…VAVEFNLPLL (172 aa)). Arginine 172 is a catalytic residue. Serine 245 functions as the Proton donor in the catalytic mechanism. Glutamate 342 is a catalytic residue.

The protein belongs to the MurB family. Requires FAD as cofactor.

It localises to the cytoplasm. It catalyses the reaction UDP-N-acetyl-alpha-D-muramate + NADP(+) = UDP-N-acetyl-3-O-(1-carboxyvinyl)-alpha-D-glucosamine + NADPH + H(+). It participates in cell wall biogenesis; peptidoglycan biosynthesis. Cell wall formation. In Xanthomonas axonopodis pv. citri (strain 306), this protein is UDP-N-acetylenolpyruvoylglucosamine reductase.